We begin with the raw amino-acid sequence, 98 residues long: R.appendiculatus Kunitz/BPTI-like protein (98 aa).

An N-terminal signal peptide occupies residues 1-23; that stretch reads MASTLKLFMLLPVILLLLQEAYG. Cystine bridges form between Cys-36–Cys-51, Cys-43–Cys-83, Cys-49–Cys-96, and Cys-74–Cys-92.

Monomer. Expressed in salivary glands.

The protein localises to the secreted. Its function is as follows. Activates large conductance calcium-activated potassium channels (maxiK, KCNMA1/KCNMB), when tested at micromolar concentrations, suggesting a potential mechanism for regulating host blood supply during feeding. Shows no antiprotease activity, and does not prevent ADP-, PAF- or collagen-induced platelet aggregation. Has no effect on blood coagulation and does not inhibit the alternative or classical complement cascades. The sequence is that of R.appendiculatus Kunitz/BPTI-like protein from Rhipicephalus appendiculatus (Brown ear tick).